The chain runs to 140 residues: MAEEPQTVLQLPPSSAAGGEGLTDVSPETTTPEPPSSAAVSPGTEEPAGDTKKKIDILLKAVGDTPIMKTKKWAVERTRTIQGPIDFIKKFLKLVASEQLFIYVNQSFAPSPDQEVGTLYECFGSDGKLVLHYCKSQAWG.

A disordered region spans residues 1–52 (MAEEPQTVLQLPPSSAAGGEGLTDVSPETTTPEPPSSAAVSPGTEEPAGDTK). Residues 25-42 (VSPETTTPEPPSSAAVSP) are compositionally biased toward low complexity. Residue G140 forms a Glycyl lysine isopeptide (Gly-Lys) (interchain with K-? in acceptor protein) linkage.

This sequence belongs to the ATG12 family. In terms of assembly, forms a conjugate with ATG5. Part of the minor complex composed of 4 sets of ATG12-ATG5 and ATG16L1 (400 kDa); this complex interacts with ATG3 leading to disruption of ATG7 interaction and promotion of ATG8-like proteins lipidation. Forms an 800-kDa complex composed of ATG12-ATG5 and ATG16L2. Interacts with DHX58/RIG-1, IFIH1/MDA5 and MAVS/IPS-1 in monomeric form as well as in ATG12-ATG5 conjugate. The interaction with MAVS is further enhanced upon vesicular stomatitis virus (VSV) infection. Interacts with ATG3; this interaction is essential for phosphatidylethanolamine (PE)-conjugated ATG8-like proteins formation. Interacts with ATG7. Interacts with ATG10. Interacts with TECPR1. Interacts with SH3BGRL. The ATG12-ATG5 conjugate interacts with PDCD6IP (via the BRO1 domain); this interaction is bridged by ATG12 and promotes multiple PDCD6IP-mediated functions such as endolysosomal trafficking, macroautophagy and exosome biogenesis. Post-translationally, acetylated by EP300.

It localises to the cytoplasm. It is found in the preautophagosomal structure membrane. Its function is as follows. Ubiquitin-like protein involved in autophagy vesicles formation. Conjugation with ATG5 through a ubiquitin-like conjugating system involving also ATG7 as an E1-like activating enzyme and ATG10 as an E2-like conjugating enzyme, is essential for its function. The ATG12-ATG5 conjugate acts as an E3-like enzyme which is required for lipidation of ATG8 family proteins and their association to the vesicle membranes. The ATG12-ATG5 conjugate also negatively regulates the innate antiviral immune response by blocking the type I IFN production pathway through direct association with RARRES3 and MAVS. Also plays a role in translation or delivery of incoming viral RNA to the translation apparatus. As part of the ATG8 conjugation system with ATG5 and ATG16L1, required for recruitment of LRRK2 to stressed lysosomes and induction of LRRK2 kinase activity in response to lysosomal stress. This is Ubiquitin-like protein ATG12 from Pongo abelii (Sumatran orangutan).